Here is a 218-residue protein sequence, read N- to C-terminus: Small ribosomal subunit protein uS3c (218 aa).

Positions 47 to 118 constitute a KH type-2 domain; the sequence is VQKNIRISSG…KLNIAITRIS (72 aa).

It belongs to the universal ribosomal protein uS3 family. As to quaternary structure, part of the 30S ribosomal subunit.

The protein localises to the plastid. The protein resides in the chloroplast. The sequence is that of Small ribosomal subunit protein uS3c (rps3) from Barbarea verna (Land cress).